Consider the following 314-residue polypeptide: MPDMKLFAGNAIPELAQRIADRLYISLGDATVSRFSDGEVAVQINENVRGSDVFIIQSTCAPTNDNLMELVVMIDAMRRASAGRITAVIPYFGYARQDRRVRSARVPITAKVVADFLSNVGVDRVLTIDLHAEQIQGFFDVPVDNIFGTPVLLEDMKARNLEDPVVVSPDLGGVVRARATAKALGDIDIAIVDKRRPRANVSEVMNLIGDVEGRDCVIVDDMIDTGGTLCKAAEALKERGAKRVFAYATHAVFSGNAAKNIKNSVLDQVIVTDSITLSKEMAATGKVTQLTLSSMLAEAIRRISNEESISAMFN.

ATP is bound by residues 37-39 and 96-97; these read DGE and RQ. The Mg(2+) site is built by His-131 and Asp-170. Residue Lys-194 is part of the active site. D-ribose 5-phosphate is bound by residues Arg-196, Asp-220, and 224–228; that span reads DTGGT.

Belongs to the ribose-phosphate pyrophosphokinase family. Class I subfamily. As to quaternary structure, homohexamer. It depends on Mg(2+) as a cofactor.

Its subcellular location is the cytoplasm. The enzyme catalyses D-ribose 5-phosphate + ATP = 5-phospho-alpha-D-ribose 1-diphosphate + AMP + H(+). It functions in the pathway metabolic intermediate biosynthesis; 5-phospho-alpha-D-ribose 1-diphosphate biosynthesis; 5-phospho-alpha-D-ribose 1-diphosphate from D-ribose 5-phosphate (route I): step 1/1. In terms of biological role, involved in the biosynthesis of the central metabolite phospho-alpha-D-ribosyl-1-pyrophosphate (PRPP) via the transfer of pyrophosphoryl group from ATP to 1-hydroxyl of ribose-5-phosphate (Rib-5-P). In Vibrio cholerae serotype O1 (strain ATCC 39315 / El Tor Inaba N16961), this protein is Ribose-phosphate pyrophosphokinase.